A 162-amino-acid polypeptide reads, in one-letter code: Cytochrome c-type biogenesis protein CcmE (162 aa).

At 1–7 the chain is on the cytoplasmic side; it reads MTRKQRR. Residues 8–28 traverse the membrane as a helical; Signal-anchor for type II membrane protein segment; sequence LTMIGGALVVLGIAAALVLNA. Topologically, residues 29 to 162 are periplasmic; it reads LRDSIVFFST…EASSKQEVSQ (134 aa). Residues histidine 122 and tyrosine 126 each coordinate heme. The tract at residues 140–162 is disordered; that stretch reads HWKDDYGAQPGAAEASSKQEVSQ.

This sequence belongs to the CcmE/CycJ family.

The protein localises to the cell inner membrane. In terms of biological role, heme chaperone required for the biogenesis of c-type cytochromes. Transiently binds heme delivered by CcmC and transfers the heme to apo-cytochromes in a process facilitated by CcmF and CcmH. In Nitrobacter winogradskyi (strain ATCC 25391 / DSM 10237 / CIP 104748 / NCIMB 11846 / Nb-255), this protein is Cytochrome c-type biogenesis protein CcmE.